The primary structure comprises 405 residues: Arginine biosynthesis bifunctional protein ArgJ (405 aa).

Substrate contacts are provided by Thr152, Lys178, Thr189, Glu276, Asn400, and Thr405. Thr189 (nucleophile) is an active-site residue.

Belongs to the ArgJ family. As to quaternary structure, heterotetramer of two alpha and two beta chains.

It is found in the cytoplasm. It catalyses the reaction N(2)-acetyl-L-ornithine + L-glutamate = N-acetyl-L-glutamate + L-ornithine. The enzyme catalyses L-glutamate + acetyl-CoA = N-acetyl-L-glutamate + CoA + H(+). It functions in the pathway amino-acid biosynthesis; L-arginine biosynthesis; L-ornithine and N-acetyl-L-glutamate from L-glutamate and N(2)-acetyl-L-ornithine (cyclic): step 1/1. Its pathway is amino-acid biosynthesis; L-arginine biosynthesis; N(2)-acetyl-L-ornithine from L-glutamate: step 1/4. Functionally, catalyzes two activities which are involved in the cyclic version of arginine biosynthesis: the synthesis of N-acetylglutamate from glutamate and acetyl-CoA as the acetyl donor, and of ornithine by transacetylation between N(2)-acetylornithine and glutamate. The protein is Arginine biosynthesis bifunctional protein ArgJ of Pseudomonas fluorescens (strain ATCC BAA-477 / NRRL B-23932 / Pf-5).